Consider the following 172-residue polypeptide: Ferritin-2 heavy chain (172 aa).

The region spanning 8-157 is the Ferritin-like diiron domain; it reads QSFATECENA…DYLTETQRVG (150 aa). Residues glutamate 25, glutamate 60, histidine 63, glutamate 105, and glutamine 139 each coordinate Fe cation.

Belongs to the ferritin family. Oligomer of 24 subunits. The functional molecule forms a roughly spherical shell with a diameter of 12 nm and contains a central cavity into which the insoluble mineral iron core is deposited.

The catalysed reaction is 4 Fe(2+) + O2 + 4 H(+) = 4 Fe(3+) + 2 H2O. Its function is as follows. Stores iron in a soluble, non-toxic, readily available form. Important for iron homeostasis. Has ferroxidase activity. Iron is taken up in the ferrous form and deposited as ferric hydroxides after oxidation. This Schistosoma mansoni (Blood fluke) protein is Ferritin-2 heavy chain (SCM-2).